Consider the following 942-residue polypeptide: Serine/threonine-protein kinase ATG1 (942 aa).

In terms of domain architecture, Protein kinase spans 11–312; sequence YVVEKEIGKG…FEEFFNNKIV (302 aa). ATP is bound by residues 17 to 25 and Lys-41; that span reads IGKGSFATV. Asp-159 acts as the Proton acceptor in catalysis. Polar residues predominate over residues 435–452; it reads NSSRVNKLDKSNLSGKSD. Disordered regions lie at residues 435-454, 505-529, and 817-836; these read NSSRVNKLDKSNLSGKSDSS, QPHNDIQNLQRAPSTTSGGTSSRRA, and NSKPGTHNQSPKSKISNDSN. The span at 515–529 shows a compositional bias: low complexity; it reads RAPSTTSGGTSSRRA. The segment covering 819-834 has biased composition (polar residues); that stretch reads KPGTHNQSPKSKISND.

Belongs to the protein kinase superfamily. Ser/Thr protein kinase family. APG1/unc-51/ULK1 subfamily. As to quaternary structure, homodimer. Forms a ternary complex with ATG13 and ATG17.

Its subcellular location is the cytoplasm. The protein resides in the preautophagosomal structure membrane. The catalysed reaction is L-seryl-[protein] + ATP = O-phospho-L-seryl-[protein] + ADP + H(+). It carries out the reaction L-threonyl-[protein] + ATP = O-phospho-L-threonyl-[protein] + ADP + H(+). Its function is as follows. Serine/threonine protein kinase involved in the cytoplasm to vacuole transport (Cvt) and found to be essential in autophagy, where it is required for the formation of autophagosomes. Involved in the clearance of protein aggregates which cannot be efficiently cleared by the proteasome. Required for selective autophagic degradation of the nucleus (nucleophagy) as well as for mitophagy which contributes to regulate mitochondrial quantity and quality by eliminating the mitochondria to a basal level to fulfill cellular energy requirements and preventing excess ROS production. Also involved in endoplasmic reticulum-specific autophagic process, in selective removal of ER-associated degradation (ERAD) substrates. Plays a key role in ATG9 and ATG23 cycling through the pre-autophagosomal structure and is necessary to promote ATG18 binding to ATG9 through phosphorylation of ATG9. Catalyzes phosphorylation of ATG4, decreasing the interaction between ATG4 and ATG8 and impairing deconjugation of PE-conjugated forms of ATG8. Contributes to virulence by conferring resistance to unstable nutrient environments and immune defense of hosts. This is Serine/threonine-protein kinase ATG1 from Candida glabrata (strain ATCC 2001 / BCRC 20586 / JCM 3761 / NBRC 0622 / NRRL Y-65 / CBS 138) (Yeast).